Here is an 84-residue protein sequence, read N- to C-terminus: Cytochrome b559 subunit alpha (84 aa).

The helical transmembrane segment at 24 to 38 (IIHAVTLPAIFIAGF) threads the bilayer. H26 lines the heme pocket.

Belongs to the PsbE/PsbF family. Heterodimer of an alpha subunit and a beta subunit. PSII is composed of 1 copy each of membrane proteins PsbA, PsbB, PsbC, PsbD, PsbE, PsbF, PsbH, PsbI, PsbJ, PsbK, PsbL, PsbM, PsbT, PsbX, PsbY, Psb30/Ycf12, peripheral proteins PsbO, CyanoQ (PsbQ), PsbU, PsbV and a large number of cofactors. It forms dimeric complexes. It depends on heme b as a cofactor.

It localises to the cellular thylakoid membrane. Its function is as follows. This b-type cytochrome is tightly associated with the reaction center of photosystem II (PSII). PSII is a light-driven water:plastoquinone oxidoreductase that uses light energy to abstract electrons from H(2)O, generating O(2) and a proton gradient subsequently used for ATP formation. It consists of a core antenna complex that captures photons, and an electron transfer chain that converts photonic excitation into a charge separation. In Prochlorococcus marinus (strain MIT 9301), this protein is Cytochrome b559 subunit alpha.